Consider the following 274-residue polypeptide: MQFAKMHGLGNDFMVVDAVTQNVYFSPELIRRLADRHCGVGFDQLLVVEPPYDPELDFHYRIFNADGSEVAQCGNGARCFARFVRLKGLTNKRDIAVSTQTGRMVLSVTDDELVRVNMGEPNFEPQQVPFRAVKAEKTYIMRADEHTVLCGVVSMGNPHCVIQVEDVETAKVETLGPLLESHERFPDRANIGFMQVVDSQTVRLRVYERGAGETQACGSGACAAVAVGILQGLLSAKVRVSLPGGELDIQWDGPGHPLFMTGPATHVYDGFIHL.

The substrate site is built by Asn-11, Gln-44, and Asn-64. The Proton donor role is filled by Cys-73. Substrate-binding positions include 74–75 (GN), Asn-157, Asn-190, and 208–209 (ER). The Proton acceptor role is filled by Cys-217. Position 218 to 219 (218 to 219 (GS)) interacts with substrate.

The protein belongs to the diaminopimelate epimerase family. Homodimer.

The protein localises to the cytoplasm. It carries out the reaction (2S,6S)-2,6-diaminopimelate = meso-2,6-diaminopimelate. It participates in amino-acid biosynthesis; L-lysine biosynthesis via DAP pathway; DL-2,6-diaminopimelate from LL-2,6-diaminopimelate: step 1/1. Functionally, catalyzes the stereoinversion of LL-2,6-diaminopimelate (L,L-DAP) to meso-diaminopimelate (meso-DAP), a precursor of L-lysine and an essential component of the bacterial peptidoglycan. This chain is Diaminopimelate epimerase, found in Pectobacterium atrosepticum (strain SCRI 1043 / ATCC BAA-672) (Erwinia carotovora subsp. atroseptica).